Consider the following 382-residue polypeptide: Na(+)/H(+) antiporter NhaA (382 aa).

11 helical membrane passes run 14-34 (AGGILLVIAAAIAMVIANSAM), 47-67 (FGMSVSHWINDGLMAVFFLLI), 87-107 (IFPAIAAVGGMLAPALIYVAF), 117-137 (GWAIPAATDIAFALGIMALLG), 146-166 (VFLLALAIIDDLGVVVIIALF), 171-191 (LSTIALTIGFIMTGVLFMLNA), 205-225 (LILWIAVLKSGVHATLAGVVI), 247-267 (ALHPYVAFAILPVFAFANAGI), 271-291 (GVSLAGLTSMLPLGVALGLFL), 321-341 (IFAVSVLCGIGFTMSIFISSL), and 353-373 (YARLGILMGSTTAALLGYSLL).

Belongs to the NhaA Na(+)/H(+) (TC 2.A.33) antiporter family.

It localises to the cell inner membrane. It catalyses the reaction Na(+)(in) + 2 H(+)(out) = Na(+)(out) + 2 H(+)(in). Na(+)/H(+) antiporter that extrudes sodium in exchange for external protons. In Vibrio cholerae serotype O1 (strain ATCC 39541 / Classical Ogawa 395 / O395), this protein is Na(+)/H(+) antiporter NhaA.